Consider the following 402-residue polypeptide: Multidrug resistance protein MdtH (402 aa).

The Cytoplasmic segment spans residues 1 to 12 (MSRVSQARNLGK). Residues 13-33 (YFLLIDNMLVVLGFFVVFPLI) traverse the membrane as a helical segment. Topologically, residues 34 to 98 (SIRFVDQMGW…GFATMGIAHE (65 aa)) are periplasmic. A helical transmembrane segment spans residues 99–116 (PWLLWFSCFLSGLGGTLF). The Cytoplasmic segment spans residues 117–138 (DPPRSALVVKLIRPEQRGRFFS). A helical transmembrane segment spans residues 139-159 (LLMMQDSAGAVIGALLGSWLL). The Periplasmic segment spans residues 160-164 (QYDFR). Residues 165-185 (LVCATGAILFILCALFNAWLL) form a helical membrane-spanning segment. At 186 to 213 (PAWKLSTVRTPVREGMRRVMSDKRFVTY) the chain is on the cytoplasmic side. A helical transmembrane segment spans residues 214-234 (VLTLAGYYMLAVQVMLMLPIM). The Periplasmic portion of the chain corresponds to 235–243 (VNDIAGSPA). The helical transmembrane segment at 244-264 (AVKWMYAIEACLSLTLLYPIA) threads the bilayer. The Cytoplasmic segment spans residues 265 to 276 (RWSEKRFRLEHR). A helical membrane pass occupies residues 277–297 (LMAGLLVMSLSMIPIGMVGNL). At 298–299 (QQ) the chain is on the periplasmic side. The chain crosses the membrane as a helical span at residues 300–320 (LFTLICAFYIGSVIAEPARET). Residues 321–339 (LSASLADARARGSYMGFSR) are Cytoplasmic-facing. Residues 340-360 (LGLAIGGAIGYIGGGWLFDMG) form a helical membrane-spanning segment. At 361–367 (KALTQPE) the chain is on the periplasmic side. A helical transmembrane segment spans residues 368–388 (LPWMMLGIIGFITFLALGWQF). Residues 389–402 (SHKRTPRRMLEPGA) lie on the Cytoplasmic side of the membrane.

Belongs to the major facilitator superfamily. DHA1 family. MdtH (TC 2.A.1.2.21) subfamily.

It is found in the cell inner membrane. In Salmonella paratyphi B (strain ATCC BAA-1250 / SPB7), this protein is Multidrug resistance protein MdtH.